Consider the following 61-residue polypeptide: Sodium/potassium-transporting ATPase subunit gamma (61 aa).

A helical transmembrane segment spans residues 24–44; the sequence is KGGLIFAAIAFVVGMLIIFSG.

Belongs to the FXYD family. Regulatory subunit of the sodium/potassium-transporting ATPase which is composed of a catalytic alpha subunit, an auxiliary non-catalytic beta subunit and an additional regulatory subunit.

It localises to the membrane. In terms of biological role, may be involved in forming the receptor site for cardiac glycoside binding or may modulate the transport function of the sodium ATPase. This Xenopus laevis (African clawed frog) protein is Sodium/potassium-transporting ATPase subunit gamma (fxyd2).